Reading from the N-terminus, the 958-residue chain is Valine--tRNA ligase (958 aa).

Positions 42–52 (PNVTGSLHMGH) match the 'HIGH' region motif. The short motif at 554 to 558 (KMSKS) is the 'KMSKS' region element. Residue K557 coordinates ATP. Positions 887-956 (LVDVAAEMAR…TEQKAEFAKL (70 aa)) form a coiled coil.

The protein belongs to the class-I aminoacyl-tRNA synthetase family. ValS type 1 subfamily. In terms of assembly, monomer.

It is found in the cytoplasm. It carries out the reaction tRNA(Val) + L-valine + ATP = L-valyl-tRNA(Val) + AMP + diphosphate. Functionally, catalyzes the attachment of valine to tRNA(Val). As ValRS can inadvertently accommodate and process structurally similar amino acids such as threonine, to avoid such errors, it has a 'posttransfer' editing activity that hydrolyzes mischarged Thr-tRNA(Val) in a tRNA-dependent manner. The polypeptide is Valine--tRNA ligase (Shewanella oneidensis (strain ATCC 700550 / JCM 31522 / CIP 106686 / LMG 19005 / NCIMB 14063 / MR-1)).